A 341-amino-acid chain; its full sequence is MATIKDVAKRANVSTTTVSHVINKTRFVSEETRNAVWAAIKELHYSPSAVARSLKVNHTKSIGLLATSSEAAYFAEIIEAVEKNCFQKGYTLILGNAWNNLEKQRAYLSMMAQKRVDGLLVMCSEYPEPLLAMLEEYRHIPMVVMDWGEAKADFTDAVIDNAFEGGYMAGRYLIERGHREIGVIPGPLERNTGAGRLAGFMKAMEEAMIKVPESWIVQGDFEPESGYRAMQQILSQPHRPTAVFCGGDIMAMGALCAADEMGLRVPQDVSLIGYDNVRNARYFTPALTTIHQPKDSLGETAFNMLLDRIVNKREEPQSIEVHPRLIERRSVADGPFRDYRR.

Positions 2 to 56 (ATIKDVAKRANVSTTTVSHVINKTRFVSEETRNAVWAAIKELHYSPSAVARSLKV) constitute an HTH lacI-type domain. The H-T-H motif DNA-binding region spans 4-23 (IKDVAKRANVSTTTVSHVIN). Residues 48–56 (SAVARSLKV) mediate DNA binding. Positions 73, 190, 192, 221, and 275 each coordinate hypoxanthine.

In terms of assembly, homodimer.

It functions in the pathway purine metabolism; purine nucleotide biosynthesis [regulation]. Functionally, is the main repressor of the genes involved in the de novo synthesis of purine nucleotides, regulating purB, purC, purEK, purF, purHD, purL, purMN and guaBA expression. PurR is allosterically activated to bind its cognate DNA by binding the purine corepressors, hypoxanthine or guanine, thereby effecting transcription repression. The sequence is that of HTH-type transcriptional repressor PurR from Escherichia coli O139:H28 (strain E24377A / ETEC).